We begin with the raw amino-acid sequence, 499 residues long: ATP synthase subunit alpha, chloroplastic (499 aa).

170 to 177 is an ATP binding site; that stretch reads GDRQTGKT.

Belongs to the ATPase alpha/beta chains family. As to quaternary structure, F-type ATPases have 2 components, CF(1) - the catalytic core - and CF(0) - the membrane proton channel. CF(1) has five subunits: alpha(3), beta(3), gamma(1), delta(1), epsilon(1). CF(0) has four main subunits: a, b, b' and c.

It is found in the plastid. The protein resides in the chloroplast thylakoid membrane. It catalyses the reaction ATP + H2O + 4 H(+)(in) = ADP + phosphate + 5 H(+)(out). Produces ATP from ADP in the presence of a proton gradient across the membrane. The alpha chain is a regulatory subunit. This Emiliania huxleyi (Coccolithophore) protein is ATP synthase subunit alpha, chloroplastic.